The sequence spans 137 residues: Large ribosomal subunit protein uL16 (137 aa).

Belongs to the universal ribosomal protein uL16 family. In terms of assembly, part of the 50S ribosomal subunit.

Functionally, binds 23S rRNA and is also seen to make contacts with the A and possibly P site tRNAs. This is Large ribosomal subunit protein uL16 from Wolbachia pipientis wMel.